A 462-amino-acid chain; its full sequence is L-seryl-tRNA(Sec) selenium transferase (462 aa).

An N6-(pyridoxal phosphate)lysine modification is found at Lys292.

Belongs to the SelA family. Pyridoxal 5'-phosphate is required as a cofactor.

The protein resides in the cytoplasm. It catalyses the reaction L-seryl-tRNA(Sec) + selenophosphate + H(+) = L-selenocysteinyl-tRNA(Sec) + phosphate. It participates in aminoacyl-tRNA biosynthesis; selenocysteinyl-tRNA(Sec) biosynthesis; selenocysteinyl-tRNA(Sec) from L-seryl-tRNA(Sec) (bacterial route): step 1/1. In terms of biological role, converts seryl-tRNA(Sec) to selenocysteinyl-tRNA(Sec) required for selenoprotein biosynthesis. The sequence is that of L-seryl-tRNA(Sec) selenium transferase from Geobacter metallireducens (strain ATCC 53774 / DSM 7210 / GS-15).